A 99-amino-acid polypeptide reads, in one-letter code: Cobalt transport protein CbiN (99 aa).

The next 2 membrane-spanning stretches (helical) occupy residues 6–26 (VLMI…YSGL) and 68–88 (SLLF…FFGY).

The protein belongs to the CbiN family. Forms an energy-coupling factor (ECF) transporter complex composed of an ATP-binding protein (A component, CbiO), a transmembrane protein (T component, CbiQ) and 2 possible substrate-capture proteins (S components, CbiM and CbiN) of unknown stoichimetry.

The protein resides in the cell membrane. The protein operates within cofactor biosynthesis; adenosylcobalamin biosynthesis. Part of the energy-coupling factor (ECF) transporter complex CbiMNOQ involved in cobalt import. The protein is Cobalt transport protein CbiN of Methanococcus vannielii (strain ATCC 35089 / DSM 1224 / JCM 13029 / OCM 148 / SB).